Reading from the N-terminus, the 334-residue chain is Aspartate carbamoyltransferase catalytic subunit (334 aa).

Carbamoyl phosphate contacts are provided by arginine 70 and threonine 71. Lysine 98 contributes to the L-aspartate binding site. Carbamoyl phosphate-binding residues include arginine 120, histidine 150, and glutamine 153. Arginine 183 and arginine 239 together coordinate L-aspartate. Positions 280 and 281 each coordinate carbamoyl phosphate.

The protein belongs to the aspartate/ornithine carbamoyltransferase superfamily. ATCase family. As to quaternary structure, heterododecamer (2C3:3R2) of six catalytic PyrB chains organized as two trimers (C3), and six regulatory PyrI chains organized as three dimers (R2).

The catalysed reaction is carbamoyl phosphate + L-aspartate = N-carbamoyl-L-aspartate + phosphate + H(+). The protein operates within pyrimidine metabolism; UMP biosynthesis via de novo pathway; (S)-dihydroorotate from bicarbonate: step 2/3. Functionally, catalyzes the condensation of carbamoyl phosphate and aspartate to form carbamoyl aspartate and inorganic phosphate, the committed step in the de novo pyrimidine nucleotide biosynthesis pathway. The protein is Aspartate carbamoyltransferase catalytic subunit of Pseudomonas aeruginosa (strain LESB58).